Reading from the N-terminus, the 206-residue chain is Guanylate kinase (206 aa).

Residues 7–185 (GIVLVLCAPS…AYDELRAAYL (179 aa)) form the Guanylate kinase-like domain. 14–21 (APSGTGKT) contributes to the ATP binding site.

Belongs to the guanylate kinase family.

It localises to the cytoplasm. It carries out the reaction GMP + ATP = GDP + ADP. Its function is as follows. Essential for recycling GMP and indirectly, cGMP. This is Guanylate kinase from Oleidesulfovibrio alaskensis (strain ATCC BAA-1058 / DSM 17464 / G20) (Desulfovibrio alaskensis).